Here is a 316-residue protein sequence, read N- to C-terminus: Golgi to ER traffic protein 2 (316 aa).

The segment at 1–75 (MATELSDAEK…SDEEVEKSTK (75 aa)) is disordered. Over 1 to 167 (MATELSDAEK…LKYYKFKVSK (167 aa)) the chain is Cytoplasmic. Over residues 7-19 (DAEKRKLLRERRQ) the composition is skewed to basic and acidic residues. Polar residues-rich tracts occupy residues 22-48 (FSNG…STSV) and 56-65 (PSGNKKSSNV). The helical transmembrane segment at 168-187 (LKSYIILIKWALLAPYVYFI) threads the bilayer. Over 188–209 (MHPNPTVLQASNLLSQIVERSN) the chain is Lumenal. Residues 210–229 (FFSIFTGLEIVFISIYYQML) traverse the membrane as a helical segment. Over 230 to 276 (KKLQRDNNVTATQNAGGILKYLTMIPEGILPIRNIQGKIGLALEYFD) the chain is Cytoplasmic. Residues 277–297 (VASMYVTDICFVLVLFGVMKY) form a helical membrane-spanning segment. The Lumenal segment spans residues 298–316 (YHSSFPISVPIEPPIAGIQ).

Belongs to the GET2 family. In terms of assembly, component of the Golgi to ER traffic (GET) complex, which is composed of GET1, GET2 and GET3. Within the complex, GET1 and GET2 form a heterotetramer which is stabilized by phosphatidylinositol binding and which binds to the GET3 homodimer.

The protein resides in the endoplasmic reticulum membrane. The protein localises to the golgi apparatus membrane. Its function is as follows. Required for the post-translational delivery of tail-anchored (TA) proteins to the endoplasmic reticulum. Together with GET1, acts as a membrane receptor for soluble GET3, which recognizes and selectively binds the transmembrane domain of TA proteins in the cytosol. The GET complex cooperates with the HDEL receptor ERD2 to mediate the ATP-dependent retrieval of resident ER proteins that contain a C-terminal H-D-E-L retention signal from the Golgi to the ER. In Kluyveromyces lactis (strain ATCC 8585 / CBS 2359 / DSM 70799 / NBRC 1267 / NRRL Y-1140 / WM37) (Yeast), this protein is Golgi to ER traffic protein 2.